A 177-amino-acid polypeptide reads, in one-letter code: Nucleoside triphosphate/diphosphate phosphatase (177 aa).

Arg-23 serves as the catalytic Proton donor. Asn-87, Asp-103, Asp-105, Asp-107, Asp-120, and Glu-123 together coordinate Mg(2+).

It belongs to the Ntdp family. It depends on Mg(2+) as a cofactor.

It catalyses the reaction a ribonucleoside 5'-triphosphate + H2O = a ribonucleoside 5'-diphosphate + phosphate + H(+). The enzyme catalyses a ribonucleoside 5'-diphosphate + H2O = a ribonucleoside 5'-phosphate + phosphate + H(+). In terms of biological role, has nucleoside phosphatase activity towards nucleoside triphosphates and nucleoside diphosphates. The polypeptide is Nucleoside triphosphate/diphosphate phosphatase (Streptococcus pneumoniae serotype 2 (strain D39 / NCTC 7466)).